The following is a 237-amino-acid chain: Isoprenyl transferase (237 aa).

The active site involves aspartate 14. Residue aspartate 14 participates in Mg(2+) binding. Substrate is bound by residues 15-18 (GNGR), tryptophan 19, arginine 27, histidine 31, and 59-61 (STE). Asparagine 62 acts as the Proton acceptor in catalysis. Residues tryptophan 63, arginine 65, arginine 184, and 190–192 (RIS) each bind substrate. Glutamate 203 serves as a coordination point for Mg(2+).

It belongs to the UPP synthase family. As to quaternary structure, homodimer. The cofactor is Mg(2+).

Functionally, catalyzes the condensation of isopentenyl diphosphate (IPP) with allylic pyrophosphates generating different type of terpenoids. In Helicobacter hepaticus (strain ATCC 51449 / 3B1), this protein is Isoprenyl transferase.